Consider the following 434-residue polypeptide: Methylenetetrahydrofolate--tRNA-(uracil-5-)-methyltransferase TrmFO (434 aa).

9 to 14 contacts FAD; that stretch reads GAGLAG.

Belongs to the MnmG family. TrmFO subfamily. FAD serves as cofactor.

Its subcellular location is the cytoplasm. The enzyme catalyses uridine(54) in tRNA + (6R)-5,10-methylene-5,6,7,8-tetrahydrofolate + NADH + H(+) = 5-methyluridine(54) in tRNA + (6S)-5,6,7,8-tetrahydrofolate + NAD(+). It catalyses the reaction uridine(54) in tRNA + (6R)-5,10-methylene-5,6,7,8-tetrahydrofolate + NADPH + H(+) = 5-methyluridine(54) in tRNA + (6S)-5,6,7,8-tetrahydrofolate + NADP(+). Functionally, catalyzes the folate-dependent formation of 5-methyl-uridine at position 54 (M-5-U54) in all tRNAs. In Bacillus licheniformis (strain ATCC 14580 / DSM 13 / JCM 2505 / CCUG 7422 / NBRC 12200 / NCIMB 9375 / NCTC 10341 / NRRL NRS-1264 / Gibson 46), this protein is Methylenetetrahydrofolate--tRNA-(uracil-5-)-methyltransferase TrmFO.